Consider the following 513-residue polypeptide: GMP synthase [glutamine-hydrolyzing] (513 aa).

Residues 3 to 200 (SVLVLDFGSQ…LITIAGITPD (198 aa)) form the Glutamine amidotransferase type-1 domain. Residue Cys-80 is the Nucleophile of the active site. Catalysis depends on residues His-174 and Glu-176. Residues 201-388 (WSSKSFIEHQ…LGIAEDILMR (188 aa)) enclose the GMPS ATP-PPase domain. 228 to 234 (SGGVDST) serves as a coordination point for ATP.

Homodimer.

It catalyses the reaction XMP + L-glutamine + ATP + H2O = GMP + L-glutamate + AMP + diphosphate + 2 H(+). Its pathway is purine metabolism; GMP biosynthesis; GMP from XMP (L-Gln route): step 1/1. Catalyzes the synthesis of GMP from XMP. This Pelodictyon phaeoclathratiforme (strain DSM 5477 / BU-1) protein is GMP synthase [glutamine-hydrolyzing].